A 359-amino-acid chain; its full sequence is Peptide chain release factor 1 (359 aa).

An N5-methylglutamine modification is found at Q236.

It belongs to the prokaryotic/mitochondrial release factor family. In terms of processing, methylated by PrmC. Methylation increases the termination efficiency of RF1.

It localises to the cytoplasm. Its function is as follows. Peptide chain release factor 1 directs the termination of translation in response to the peptide chain termination codons UAG and UAA. The polypeptide is Peptide chain release factor 1 (Streptococcus pneumoniae serotype 19F (strain G54)).